We begin with the raw amino-acid sequence, 192 residues long: Small ribosomal subunit protein uS4B (192 aa).

Ser89 and Ser179 each carry phosphoserine. The 75-residue stretch at 107–181 (RRLQTQVFKL…CKRKRLRSQQ (75 aa)) folds into the S4 RNA-binding domain. The interval 166–192 (GGRPGRCKRKRLRSQQEGGEGEEAEEE) is disordered.

It belongs to the universal ribosomal protein uS4 family. Component of the small ribosomal subunit (SSU). Mature yeast ribosomes consist of a small (40S) and a large (60S) subunit. The 40S small subunit contains 1 molecule of ribosomal RNA (18S rRNA) and at least 33 different proteins. The large 60S subunit contains 3 rRNA molecules (25S, 5.8S and 5S rRNA) and at least 46 different proteins. Interacts with snoRNA U3. uS11 interacts with MPP10. Component of the ribosomal small subunit (SSU) processome composed of at least 40 protein subunits and snoRNA U3.

The protein localises to the cytoplasm. Component of the ribosome, a large ribonucleoprotein complex responsible for the synthesis of proteins in the cell. The small ribosomal subunit (SSU) binds messenger RNAs (mRNAs) and translates the encoded message by selecting cognate aminoacyl-transfer RNA (tRNA) molecules. The large subunit (LSU) contains the ribosomal catalytic site termed the peptidyl transferase center (PTC), which catalyzes the formation of peptide bonds, thereby polymerizing the amino acids delivered by tRNAs into a polypeptide chain. The nascent polypeptides leave the ribosome through a tunnel in the LSU and interact with protein factors that function in enzymatic processing, targeting, and the membrane insertion of nascent chains at the exit of the ribosomal tunnel. uS4 is involved in nucleolar processing of pre-18S ribosomal RNA and ribosome assembly. The polypeptide is Small ribosomal subunit protein uS4B (rps902) (Schizosaccharomyces pombe (strain 972 / ATCC 24843) (Fission yeast)).